The sequence spans 500 residues: Probable cytosol aminopeptidase (500 aa).

2 residues coordinate Mn(2+): Lys-265 and Asp-270. Lys-277 is an active-site residue. Mn(2+)-binding residues include Asp-288, Asp-347, and Glu-349. The active site involves Arg-351.

It belongs to the peptidase M17 family. It depends on Mn(2+) as a cofactor.

It localises to the cytoplasm. It carries out the reaction Release of an N-terminal amino acid, Xaa-|-Yaa-, in which Xaa is preferably Leu, but may be other amino acids including Pro although not Arg or Lys, and Yaa may be Pro. Amino acid amides and methyl esters are also readily hydrolyzed, but rates on arylamides are exceedingly low.. It catalyses the reaction Release of an N-terminal amino acid, preferentially leucine, but not glutamic or aspartic acids.. Its function is as follows. Presumably involved in the processing and regular turnover of intracellular proteins. Catalyzes the removal of unsubstituted N-terminal amino acids from various peptides. This Rickettsia typhi (strain ATCC VR-144 / Wilmington) protein is Probable cytosol aminopeptidase.